The primary structure comprises 105 residues: Small ribosomal subunit protein uS10 (105 aa).

Belongs to the universal ribosomal protein uS10 family. In terms of assembly, part of the 30S ribosomal subunit.

Functionally, involved in the binding of tRNA to the ribosomes. This Rickettsia bellii (strain OSU 85-389) protein is Small ribosomal subunit protein uS10.